Reading from the N-terminus, the 187-residue chain is Ribosome-recycling factor (187 aa).

This sequence belongs to the RRF family.

The protein resides in the cytoplasm. Functionally, responsible for the release of ribosomes from messenger RNA at the termination of protein biosynthesis. May increase the efficiency of translation by recycling ribosomes from one round of translation to another. The polypeptide is Ribosome-recycling factor (Methylobacterium nodulans (strain LMG 21967 / CNCM I-2342 / ORS 2060)).